Reading from the N-terminus, the 348-residue chain is tRNA N6-adenosine threonylcarbamoyltransferase (348 aa).

Residues histidine 120 and histidine 124 each contribute to the Fe cation site. Residues 143 to 147, aspartate 176, glycine 189, and asparagine 282 each bind substrate; that span reads LVSGG. Aspartate 310 provides a ligand contact to Fe cation.

Belongs to the KAE1 / TsaD family. It depends on Fe(2+) as a cofactor.

Its subcellular location is the cytoplasm. It carries out the reaction L-threonylcarbamoyladenylate + adenosine(37) in tRNA = N(6)-L-threonylcarbamoyladenosine(37) in tRNA + AMP + H(+). Functionally, required for the formation of a threonylcarbamoyl group on adenosine at position 37 (t(6)A37) in tRNAs that read codons beginning with adenine. Is involved in the transfer of the threonylcarbamoyl moiety of threonylcarbamoyl-AMP (TC-AMP) to the N6 group of A37, together with TsaE and TsaB. TsaD likely plays a direct catalytic role in this reaction. The protein is tRNA N6-adenosine threonylcarbamoyltransferase of Paracidovorax citrulli (strain AAC00-1) (Acidovorax citrulli).